Consider the following 64-residue polypeptide: Large ribosomal subunit protein uL30 (64 aa).

The protein belongs to the universal ribosomal protein uL30 family. Part of the 50S ribosomal subunit.

This Rhodopseudomonas palustris (strain BisA53) protein is Large ribosomal subunit protein uL30.